We begin with the raw amino-acid sequence, 228 residues long: MKLVLIRHGESAWNLENRFTGWKDVDLSPKGMEEAKSAGKILKEMNLVFDVAYTSYLKRAIKTLNIVLEEMDELYIPVYKSWRLNERHYGALQGLNKAETAKKYGDEQVHIWRRSFDVAPPSIDKNSEYYPKSDRRYADLADSDIPLGESLKDTIARVLPYWHSDISKSLQEEKNVIVAAHGNSLRALIKYLLNISNEDILNLNLVTGKPMVFEIDKDLKVLSSPELF.

Substrate is bound by residues 7 to 14, 20 to 21, R59, 86 to 89, K97, 113 to 114, and 182 to 183; these read RHGESAWN, TG, ERHY, RR, and GN. Residue H8 is the Tele-phosphohistidine intermediate of the active site. Catalysis depends on E86, which acts as the Proton donor/acceptor.

Belongs to the phosphoglycerate mutase family. BPG-dependent PGAM subfamily.

The enzyme catalyses (2R)-2-phosphoglycerate = (2R)-3-phosphoglycerate. It functions in the pathway carbohydrate degradation; glycolysis; pyruvate from D-glyceraldehyde 3-phosphate: step 3/5. Its function is as follows. Catalyzes the interconversion of 2-phosphoglycerate and 3-phosphoglycerate. The protein is 2,3-bisphosphoglycerate-dependent phosphoglycerate mutase of Fusobacterium nucleatum subsp. nucleatum (strain ATCC 25586 / DSM 15643 / BCRC 10681 / CIP 101130 / JCM 8532 / KCTC 2640 / LMG 13131 / VPI 4355).